The sequence spans 562 residues: Arginine--tRNA ligase (562 aa).

The 'HIGH' region motif lies at 122 to 132 (PNIAKDMHVGH).

It belongs to the class-I aminoacyl-tRNA synthetase family. In terms of assembly, monomer.

It is found in the cytoplasm. The enzyme catalyses tRNA(Arg) + L-arginine + ATP = L-arginyl-tRNA(Arg) + AMP + diphosphate. The polypeptide is Arginine--tRNA ligase (Chlamydia felis (strain Fe/C-56) (Chlamydophila felis)).